We begin with the raw amino-acid sequence, 334 residues long: Cyclin N-terminal domain-containing protein 1 (334 aa).

Residues 29-180 (NALLHLAQQN…ILKSLNFQIN (152 aa)) enclose the Cyclin N-terminal domain.

In terms of assembly, interacts with PRR19; this interaction promotes crossover formation. Interacts with RFC3 and RFC4; these interactions facilitate crossover formation. Interacts with CDC34; this interaction regulates the cell-cycle progression. As to expression, isoform 2 is expressed in spermatocyte.

The protein localises to the nucleus. It is found in the cytoplasm. It localises to the chromosome. Functionally, plays a role in the different steps of crossover formation during meiotic recombination. Participates in the crossover differentiation step of crossover-specific recombination intermediates through its interaction with PRR19. In addition, stimulates crossover formation through the interactions with RFC3 and RFC4 and simultaneously regulates cell-cycle progression through interactions with CDC34 and subsequent ubiquitination of WEE1. May also participates in an active deselection process that destabilizes or removes excess pre-CO intermediates. The protein is Cyclin N-terminal domain-containing protein 1 of Mus musculus (Mouse).